An 898-amino-acid chain; its full sequence is Zinc finger protein 574 (898 aa).

3 C2H2-type zinc fingers span residues 16 to 38, 76 to 98, and 126 to 148; these read YVCS…QNSH, YQCL…QELH, and YECV…RQTH. S164 is subject to Phosphoserine. Residues 213-235 form a C2H2-type 4 zinc finger; the sequence is YKCSECSQLFQMPADFLEHQATH. Positions 243 to 305 are disordered; sequence AEEPATQQET…PRRSSSGESG (63 aa). Over residues 273–290 the composition is skewed to basic and acidic residues; it reads HSYELRNELRNGEAMGRD. S301 is modified (phosphoserine). 4 consecutive C2H2-type zinc fingers follow at residues 310–332, 337–359, 365–387, and 393–414; these read LFCS…LRSH, FKCP…LGDH, FLCV…RRAH, and HSCP…RRTH. Residues 417–460 are disordered; the sequence is GGVPLPTTPVPPEEPAISFPEPAPAETGELEAPELPVSEESSAE. C2H2-type zinc fingers lie at residues 467–490, 496–518, 524–546, 552–574, 580–602, and 608–631; these read YRCL…RFVH, HKCS…LRTH, FPCP…RLTH, YRCG…RLVH, YRCQ…RYHH, and YKCR…LVVH. The C2H2-type 15; degenerate zinc-finger motif lies at 637 to 660; sequence HRCPSCGAAFPSSLRLREHRCAAA. Residues 668-690 form a C2H2-type 16 zinc finger; sequence FECGTCGKKVGSAARLQAHEAAH. The interval 691-735 is disordered; it reads AAAGPGEVLAKEPPAPRAARATRTPVAPSPTALGGTTSAAPAAPA. Over residues 707–734 the composition is skewed to low complexity; it reads RAARATRTPVAPSPTALGGTTSAAPAAP. Phosphoserine is present on S719. T726 carries the phosphothreonine modification. 4 consecutive C2H2-type zinc fingers follow at residues 740–762, 768–790, 796–818, and 824–846; these read LECS…RRIH, YPCP…RRLH, FACE…RRIH, and YSCP…RKTH. The residue at position 834 (R834) is an Asymmetric dimethylarginine.

It belongs to the krueppel C2H2-type zinc-finger protein family.

The protein localises to the nucleus. In terms of biological role, may be involved in transcriptional regulation. The protein is Zinc finger protein 574 (Znf574) of Rattus norvegicus (Rat).